A 124-amino-acid polypeptide reads, in one-letter code: Single-stranded DNA-binding protein (124 aa).

Belongs to the phi29likevirus single-strand-binding protein family. In terms of assembly, monomer.

Functionally, single-stranded DNA binding protein required for the elongation during viral DNA replication by strand displacement. Displaced viral DNA strands are transiently coated with the ssDNA-binding protein and therefore protected against nucleases. The latter is then probably removed by the replisome that performs lagging strand synthesis or during the events that lead up to the recombination process. Stimulates in vitro DNA replication several fold. Has helix-destabilizing activity since it removes secondary structure from the ssDNA in replicative intermediates. The polypeptide is Single-stranded DNA-binding protein (5) (Bacillus subtilis (Bacteriophage phi-29)).